Reading from the N-terminus, the 834-residue chain is DIS3-like exonuclease 2 (834 aa).

Positions Met1–Leu23 are enriched in polar residues. A disordered region spans residues Met1–Ser35. Positions 354 and 363 each coordinate Mg(2+).

Belongs to the RNR ribonuclease family. DIS3L2 subfamily. The cofactor is Mg(2+). Requires Mn(2+) as cofactor.

It is found in the cytoplasm. The protein resides in the P-body. In terms of biological role, 3'-5'-exoribonuclease that specifically recognizes RNAs polyuridylated at their 3' end and mediates their degradation. Component of an exosome-independent RNA degradation pathway that mediates degradation of both mRNAs and miRNAs that have been polyuridylated by a terminal uridylyltransferase. Essential for correct mitosis, and negatively regulates cell proliferation. This Xenopus tropicalis (Western clawed frog) protein is DIS3-like exonuclease 2.